The primary structure comprises 434 residues: Glutamate/glutamine/aspartate/asparagine transport system permease protein BztC (434 aa).

10 helical membrane passes run Leu-41–Leu-61, Leu-113–Pro-133, Lys-135–Pro-155, Ile-156–Leu-176, Leu-180–Ala-200, Phe-227–Leu-247, Gly-272–Pro-292, Leu-298–Ile-318, Ile-360–Phe-380, and Gly-398–Met-418. Residues Phe-227–Ser-422 enclose the ABC transmembrane type-1 domain.

It belongs to the binding-protein-dependent transport system permease family. HisMQ subfamily. In terms of assembly, bztB and BztC form a heterodimer which can form a membrane complex with a homodimer of BztD.

Its subcellular location is the cell inner membrane. Part of a binding-protein-dependent transport system for glutamate, glutamine, aspartate and asparagine. Probably responsible for the translocation of the substrate across the membrane. This Rhodobacter capsulatus (strain ATCC BAA-309 / NBRC 16581 / SB1003) protein is Glutamate/glutamine/aspartate/asparagine transport system permease protein BztC (bztC).